We begin with the raw amino-acid sequence, 272 residues long: 2,3,4,5-tetrahydropyridine-2,6-dicarboxylate N-succinyltransferase (272 aa).

Residues R104 and D141 each coordinate substrate.

This sequence belongs to the transferase hexapeptide repeat family. As to quaternary structure, homotrimer.

Its subcellular location is the cytoplasm. It catalyses the reaction (S)-2,3,4,5-tetrahydrodipicolinate + succinyl-CoA + H2O = (S)-2-succinylamino-6-oxoheptanedioate + CoA. Its pathway is amino-acid biosynthesis; L-lysine biosynthesis via DAP pathway; LL-2,6-diaminopimelate from (S)-tetrahydrodipicolinate (succinylase route): step 1/3. The polypeptide is 2,3,4,5-tetrahydropyridine-2,6-dicarboxylate N-succinyltransferase (Alkalilimnicola ehrlichii (strain ATCC BAA-1101 / DSM 17681 / MLHE-1)).